A 497-amino-acid polypeptide reads, in one-letter code: Probable cytosol aminopeptidase (497 aa).

K267 and D272 together coordinate Mn(2+). K279 is an active-site residue. 3 residues coordinate Mn(2+): D290, D349, and E351. Residue R353 is part of the active site.

This sequence belongs to the peptidase M17 family. Requires Mn(2+) as cofactor.

It is found in the cytoplasm. It catalyses the reaction Release of an N-terminal amino acid, Xaa-|-Yaa-, in which Xaa is preferably Leu, but may be other amino acids including Pro although not Arg or Lys, and Yaa may be Pro. Amino acid amides and methyl esters are also readily hydrolyzed, but rates on arylamides are exceedingly low.. The enzyme catalyses Release of an N-terminal amino acid, preferentially leucine, but not glutamic or aspartic acids.. Functionally, presumably involved in the processing and regular turnover of intracellular proteins. Catalyzes the removal of unsubstituted N-terminal amino acids from various peptides. The sequence is that of Probable cytosol aminopeptidase from Nitrosomonas europaea (strain ATCC 19718 / CIP 103999 / KCTC 2705 / NBRC 14298).